Reading from the N-terminus, the 313-residue chain is tRNA dimethylallyltransferase (313 aa).

Position 9–16 (9–16) interacts with ATP; sequence GPTATGKS. A substrate-binding site is contributed by 11 to 16; sequence TATGKS.

This sequence belongs to the IPP transferase family. In terms of assembly, monomer. Requires Mg(2+) as cofactor.

The enzyme catalyses adenosine(37) in tRNA + dimethylallyl diphosphate = N(6)-dimethylallyladenosine(37) in tRNA + diphosphate. Functionally, catalyzes the transfer of a dimethylallyl group onto the adenine at position 37 in tRNAs that read codons beginning with uridine, leading to the formation of N6-(dimethylallyl)adenosine (i(6)A). The chain is tRNA dimethylallyltransferase from Mycobacteroides abscessus (strain ATCC 19977 / DSM 44196 / CCUG 20993 / CIP 104536 / JCM 13569 / NCTC 13031 / TMC 1543 / L948) (Mycobacterium abscessus).